The primary structure comprises 582 residues: Peptidyl-prolyl cis-trans isomerase FKBP10 (582 aa).

Positions 1-26 (MFPAGPPSHSLLRLPLLQLLLLVVQA) are cleaved as a signal peptide. PPIase FKBP-type domains are found at residues 62–150 (GDFV…LDVW), 174–262 (GDFV…IDVH), and 286–374 (GDFM…IDFH). Asn70, Asn182, Asn294, Asn310, Asn352, Asn393, and Asn407 each carry an N-linked (GlcNAc...) asparagine glycan. The 88-residue stretch at 399–486 (GDFVRYHYNC…LFEVELVSRE (88 aa)) folds into the PPIase FKBP-type 4 domain. 2 EF-hand domains span residues 497 to 532 (WHKD…QVSE) and 542 to 577 (DPEK…DEER). Positions 510, 512, 514, 516, 521, 555, 557, 559, 561, and 566 each coordinate Ca(2+). The segment at 533 to 582 (GKGRLMPGQDPEKTIGDMFQNQDRNQDGKITVDELKLKSDEDEERVHEEL) is disordered. Basic and acidic residues predominate over residues 556 to 582 (RNQDGKITVDELKLKSDEDEERVHEEL). The Prevents secretion from ER motif lies at 579 to 582 (HEEL).

Glycosylated and phosphorylated.

Its subcellular location is the endoplasmic reticulum lumen. It catalyses the reaction [protein]-peptidylproline (omega=180) = [protein]-peptidylproline (omega=0). Inhibited by both FK506 and rapamycin, but not by cyclosporin A. In terms of biological role, PPIases accelerate the folding of proteins during protein synthesis. This Homo sapiens (Human) protein is Peptidyl-prolyl cis-trans isomerase FKBP10 (FKBP10).